The sequence spans 423 residues: Sporulation-regulated protein 28 (423 aa).

A Septin-type G domain is found at 28-342 (KGLQLSILLL…ENYRAKVLTE (315 aa)). Positions 38 to 45 (GEKGSGKS) are G1 motif. Residues 38 to 45 (GEKGSGKS), Gly124, 204 to 212 (KADGLTETE), and Arg291 each bind GTP. A G3 motif region spans residues 121-124 (LFPG). Positions 203 to 206 (PKAD) are G4 motif. Over residues 360–381 (RGSVSNVSTRRNSASRTLGNPD) the composition is skewed to polar residues. The disordered stretch occupies residues 360–385 (RGSVSNVSTRRNSASRTLGNPDTNDE). Residues 384–417 (DENAYQIHKEIDEKNRIIEDYQRKIDLLEKMLAA) are a coiled coil.

It belongs to the TRAFAC class TrmE-Era-EngA-EngB-Septin-like GTPase superfamily. Septin GTPase family. Interacts with itself. Interacts with CDC11 and SPR3; probably to form a ring at the bud neck.

It is found in the membrane. The protein localises to the bud neck. Functionally, septins are GTPases involved in cytokinesis that assemble into filaments and form a ring at the cleavage site. May act by recruiting MYO1 and HOF1, a protein involved in septation, to the site of cleavage. Septins are also involved in cell morphogenesis, bud site selection, chitin deposition, cell cycle regulation, cell compartmentalization and spore wall formation. This chain is Sporulation-regulated protein 28 (SPR28), found in Saccharomyces cerevisiae (strain ATCC 204508 / S288c) (Baker's yeast).